Consider the following 815-residue polypeptide: Ferripyoverdine receptor (815 aa).

The N-terminal stretch at 1–43 (MPAPHGLSPLSKAFLMRRAFQRRILPHSLAMALSLPLAGYVQA) is a signal peptide. The region spanning 161-271 (TPRETPQSIT…LGATINLIRK (111 aa)) is the TBDR plug domain. The 540-residue stretch at 276 to 815 (EFKGHVELGA…NLMFSTRWDF (540 aa)) folds into the TBDR beta-barrel domain. The short motif at 798–815 (SASYGDPRNLMFSTRWDF) is the TonB C-terminal box element.

The protein belongs to the TonB-dependent receptor family.

Its subcellular location is the cell outer membrane. In terms of biological role, receptor for the siderophore ferripyoverdine. The polypeptide is Ferripyoverdine receptor (fpvA) (Pseudomonas aeruginosa (strain ATCC 15692 / DSM 22644 / CIP 104116 / JCM 14847 / LMG 12228 / 1C / PRS 101 / PAO1)).